The following is a 1435-amino-acid chain: Gag-Pol polyprotein (1435 aa).

A lipid anchor (N-myristoyl glycine; by host) is attached at G2. The interval V7–L31 is interaction with Gp41. The tract at residues L8 to R43 is interaction with host CALM1. The interval E12–I19 is interaction with host AP3D1. Residues D14–H33 form an interaction with membrane phosphatidylinositol 4,5-bisphosphate and RNA region. The short motif at W16 to R22 is the Nuclear export signal element. The Nuclear localization signal signature appears at K26 to K32. The tract at residues E73–S77 is interaction with membrane phosphatidylinositol 4,5-bisphosphate. The interval E106–V128 is disordered. Phosphotyrosine; by host is present on Y132. The tract at residues N189–Q227 is interaction with host PPIA/CYPA and NUP153. The PPIA/CYPA-binding loop stretch occupies residues P217 to P225. The dimerization/Multimerization of capsid protein p24 stretch occupies residues Y277 to L363. 2 consecutive CCHC-type zinc fingers follow at residues V390–A407 and K411–E428. The tract at residues F448 to Q481 is disordered. The tract at residues P489–L493 is dimerization of protease. Residues K508–L577 enclose the Peptidase A2 domain. The active-site For protease activity; shared with dimeric partner is D513. Dimerization of protease stretches follow at residues G537 to K543 and N576 to P588. The Reverse transcriptase domain occupies E631–L821. Mg(2+) is bound by residues D697, D772, and D773. Residues F814–H822 are RT 'primer grip'. Positions W985 to W1001 match the Tryptophan repeat motif motif. Positions I1021 to R1144 constitute an RNase H type-1 domain. Positions 1030, 1065, 1085, and 1136 each coordinate Mg(2+). The Integrase-type zinc finger occupies D1150–Q1191. Positions 1159, 1163, 1187, and 1190 each coordinate Zn(2+). Residues V1201 to I1351 form the Integrase catalytic domain. Residues D1211, D1263, and E1299 each coordinate Mg(2+). Positions F1370–D1417 form a DNA-binding region, integrase-type.

In terms of assembly, homotrimer; further assembles as hexamers of trimers. Interacts with gp41 (via C-terminus). Interacts with host CALM1; this interaction induces a conformational change in the Matrix protein, triggering exposure of the myristate group. Interacts with host AP3D1; this interaction allows the polyprotein trafficking to multivesicular bodies during virus assembly. Part of the pre-integration complex (PIC) which is composed of viral genome, matrix protein, Vpr and integrase. As to quaternary structure, homodimer; the homodimer further multimerizes as homohexamers or homopentamers. Interacts with human PPIA/CYPA; this interaction stabilizes the capsid. Interacts with human NUP153. Interacts with host PDZD8; this interaction stabilizes the capsid. Interacts with monkey TRIM5; this interaction destabilizes the capsid. Homodimer, whose active site consists of two apposed aspartic acid residues. In terms of assembly, heterodimer of p66 RT and p51 RT (RT p66/p51). Heterodimerization of RT is essential for DNA polymerase activity. The overall folding of the subdomains is similar in p66 RT and p51 RT but the spatial arrangements of the subdomains are dramatically different. As to quaternary structure, homotetramer; may further associate as a homohexadecamer. Part of the pre-integration complex (PIC) which is composed of viral genome, matrix protein, Vpr and integrase. Interacts with human SMARCB1/INI1 and human PSIP1/LEDGF isoform 1. Interacts with human KPNA3; this interaction might play a role in nuclear import of the pre-. integration complex. Interacts with human NUP153; this interaction might play a role in nuclear import of the pre-integration complex. The cofactor is Mg(2+). Post-translationally, specific enzymatic cleavages by the viral protease yield mature proteins. The protease is released by autocatalytic cleavage. The polyprotein is cleaved during and after budding, this process is termed maturation. Proteolytic cleavage of p66 RT removes the RNase H domain to yield the p51 RT subunit. Nucleocapsid protein p7 might be further cleaved after virus entry. Tyrosine phosphorylated presumably in the virion by a host kinase. Phosphorylation is apparently not a major regulator of membrane association. In terms of processing, phosphorylated possibly by host MAPK1; this phosphorylation is necessary for Pin1-mediated virion uncoating. Post-translationally, methylated by host PRMT6, impairing its function by reducing RNA annealing and the initiation of reverse transcription.

The protein localises to the host cell membrane. The protein resides in the host endosome. It localises to the host multivesicular body. It is found in the virion membrane. Its subcellular location is the host nucleus. The protein localises to the host cytoplasm. The protein resides in the virion. It catalyses the reaction Specific for a P1 residue that is hydrophobic, and P1' variable, but often Pro.. It carries out the reaction Endohydrolysis of RNA in RNA/DNA hybrids. Three different cleavage modes: 1. sequence-specific internal cleavage of RNA. Human immunodeficiency virus type 1 and Moloney murine leukemia virus enzymes prefer to cleave the RNA strand one nucleotide away from the RNA-DNA junction. 2. RNA 5'-end directed cleavage 13-19 nucleotides from the RNA end. 3. DNA 3'-end directed cleavage 15-20 nucleotides away from the primer terminus.. The enzyme catalyses 3'-end directed exonucleolytic cleavage of viral RNA-DNA hybrid.. The catalysed reaction is DNA(n) + a 2'-deoxyribonucleoside 5'-triphosphate = DNA(n+1) + diphosphate. Its activity is regulated as follows. Protease: The viral protease is inhibited by many synthetic protease inhibitors (PIs), such as amprenavir, atazanavir, indinavir, loprinavir, nelfinavir, ritonavir and saquinavir. Use of protease inhibitors in tritherapy regimens permit more ambitious therapeutic strategies. Reverse transcriptase/ribonuclease H: RT can be inhibited either by nucleoside RT inhibitors (NRTIs) or by non nucleoside RT inhibitors (NNRTIs). NRTIs act as chain terminators, whereas NNRTIs inhibit DNA polymerization by binding a small hydrophobic pocket near the RT active site and inducing an allosteric change in this region. Classical NRTIs are abacavir, adefovir (PMEA), didanosine (ddI), lamivudine (3TC), stavudine (d4T), tenofovir (PMPA), zalcitabine (ddC), and zidovudine (AZT). Classical NNRTIs are atevirdine (BHAP U-87201E), delavirdine, efavirenz (DMP-266), emivirine (I-EBU), and nevirapine (BI-RG-587). The tritherapies used as a basic effective treatment of AIDS associate two NRTIs and one NNRTI. Functionally, mediates, with Gag polyprotein, the essential events in virion assembly, including binding the plasma membrane, making the protein-protein interactions necessary to create spherical particles, recruiting the viral Env proteins, and packaging the genomic RNA via direct interactions with the RNA packaging sequence (Psi). Gag-Pol polyprotein may regulate its own translation, by the binding genomic RNA in the 5'-UTR. At low concentration, the polyprotein would promote translation, whereas at high concentration, the polyprotein would encapsidate genomic RNA and then shut off translation. In terms of biological role, targets the polyprotein to the plasma membrane via a multipartite membrane-binding signal, that includes its myristoylated N-terminus. Matrix protein is part of the pre-integration complex. Implicated in the release from host cell mediated by Vpu. Binds to RNA. Its function is as follows. Forms the conical core that encapsulates the genomic RNA-nucleocapsid complex in the virion. Most core are conical, with only 7% tubular. The core is constituted by capsid protein hexamer subunits. The core is disassembled soon after virion entry. Host restriction factors such as monkey TRIM5-alpha or TRIMCyp bind retroviral capsids and cause premature capsid disassembly, leading to blocks in reverse transcription. Capsid restriction by TRIM5 is one of the factors which restricts HIV-1 to the human species. Host PIN1 apparently facilitates the virion uncoating. On the other hand, interactions with PDZD8 or CYPA stabilize the capsid. Encapsulates and protects viral dimeric unspliced genomic RNA (gRNA). Binds these RNAs through its zinc fingers. Acts as a nucleic acid chaperone which is involved in rearangement of nucleic acid secondary structure during gRNA retrotranscription. Also facilitates template switch leading to recombination. As part of the polyprotein, participates in gRNA dimerization, packaging, tRNA incorporation and virion assembly. Functionally, aspartyl protease that mediates proteolytic cleavages of Gag and Gag-Pol polyproteins during or shortly after the release of the virion from the plasma membrane. Cleavages take place as an ordered, step-wise cascade to yield mature proteins. This process is called maturation. Displays maximal activity during the budding process just prior to particle release from the cell. Also cleaves Nef and Vif, probably concomitantly with viral structural proteins on maturation of virus particles. Hydrolyzes host EIF4GI and PABP1 in order to shut off the capped cellular mRNA translation. The resulting inhibition of cellular protein synthesis serves to ensure maximal viral gene expression and to evade host immune response. Also mediates cleavage of host YTHDF3. Mediates cleavage of host CARD8, thereby activating the CARD8 inflammasome, leading to the clearance of latent HIV-1 in patient CD4(+) T-cells after viral reactivation; in contrast, HIV-1 can evade CARD8-sensing when its protease remains inactive in infected cells prior to viral budding. In terms of biological role, multifunctional enzyme that converts the viral RNA genome into dsDNA in the cytoplasm, shortly after virus entry into the cell. This enzyme displays a DNA polymerase activity that can copy either DNA or RNA templates, and a ribonuclease H (RNase H) activity that cleaves the RNA strand of RNA-DNA heteroduplexes in a partially processive 3' to 5' endonucleasic mode. Conversion of viral genomic RNA into dsDNA requires many steps. A tRNA(3)-Lys binds to the primer-binding site (PBS) situated at the 5'-end of the viral RNA. RT uses the 3' end of the tRNA primer to perform a short round of RNA-dependent minus-strand DNA synthesis. The reading proceeds through the U5 region and ends after the repeated (R) region which is present at both ends of viral RNA. The portion of the RNA-DNA heteroduplex is digested by the RNase H, resulting in a ssDNA product attached to the tRNA primer. This ssDNA/tRNA hybridizes with the identical R region situated at the 3' end of viral RNA. This template exchange, known as minus-strand DNA strong stop transfer, can be either intra- or intermolecular. RT uses the 3' end of this newly synthesized short ssDNA to perform the RNA-dependent minus-strand DNA synthesis of the whole template. RNase H digests the RNA template except for two polypurine tracts (PPTs) situated at the 5'-end and near the center of the genome. It is not clear if both polymerase and RNase H activities are simultaneous. RNase H probably can proceed both in a polymerase-dependent (RNA cut into small fragments by the same RT performing DNA synthesis) and a polymerase-independent mode (cleavage of remaining RNA fragments by free RTs). Secondly, RT performs DNA-directed plus-strand DNA synthesis using the PPTs that have not been removed by RNase H as primers. PPTs and tRNA primers are then removed by RNase H. The 3' and 5' ssDNA PBS regions hybridize to form a circular dsDNA intermediate. Strand displacement synthesis by RT to the PBS and PPT ends produces a blunt ended, linear dsDNA copy of the viral genome that includes long terminal repeats (LTRs) at both ends. Its function is as follows. Catalyzes viral DNA integration into the host chromosome, by performing a series of DNA cutting and joining reactions. This enzyme activity takes place after virion entry into a cell and reverse transcription of the RNA genome in dsDNA. The first step in the integration process is 3' processing. This step requires a complex comprising the viral genome, matrix protein, Vpr and integrase. This complex is called the pre-integration complex (PIC). The integrase protein removes 2 nucleotides from each 3' end of the viral DNA, leaving recessed CA OH's at the 3' ends. In the second step, the PIC enters cell nucleus. This process is mediated through integrase and Vpr proteins, and allows the virus to infect a non dividing cell. This ability to enter the nucleus is specific of lentiviruses, other retroviruses cannot and rely on cell division to access cell chromosomes. In the third step, termed strand transfer, the integrase protein joins the previously processed 3' ends to the 5' ends of strands of target cellular DNA at the site of integration. The 5'-ends are produced by integrase-catalyzed staggered cuts, 5 bp apart. A Y-shaped, gapped, recombination intermediate results, with the 5'-ends of the viral DNA strands and the 3' ends of target DNA strands remaining unjoined, flanking a gap of 5 bp. The last step is viral DNA integration into host chromosome. This involves host DNA repair synthesis in which the 5 bp gaps between the unjoined strands are filled in and then ligated. Since this process occurs at both cuts flanking the HIV genome, a 5 bp duplication of host DNA is produced at the ends of HIV-1 integration. Alternatively, Integrase may catalyze the excision of viral DNA just after strand transfer, this is termed disintegration. This is Gag-Pol polyprotein (gag-pol) from Human immunodeficiency virus type 1 group M subtype B (isolate HXB2) (HIV-1).